Reading from the N-terminus, the 318-residue chain is Molybdenum cofactor insertion chaperone PaoD (318 aa).

As to quaternary structure, homodimer in solution. Interacts with MocA.

Its function is as follows. Chaperone required for the production of an active PaoABC aldehyde oxidoreductase. Stabilizes the PaoC subunit and is required for the insertion of the molybdenum cofactor into this subunit. Binds molybdenum cofactor. Binds the molybdopterin cytosine dinucleotide (MCD) form of the cofactor after its formation by the molybdenum cofactor cytidylyltransferase MocA. The sequence is that of Molybdenum cofactor insertion chaperone PaoD from Escherichia coli (strain K12).